We begin with the raw amino-acid sequence, 918 residues long: Glutamate receptor ionotropic, kainate 1 (918 aa).

The signal sequence occupies residues 1–30 (MELGTLLAQPGLWTRDTSWALLYFLCYILP). Residues 31-576 (QTAPQVLRIG…VFSFLNPLSP (546 aa)) lie on the Extracellular side of the membrane. Residues N68, N74, N276, N379, N428, N439, and N446 are each glycosylated (N-linked (GlcNAc...) asparagine). Residues P531, T533, and R538 each contribute to the L-glutamate site. An N-linked (GlcNAc...) asparagine glycan is attached at N561. Residues 577–597 (DIWMYVLLACLGVSCVLFVIA) form a helical membrane-spanning segment. Topologically, residues 598–653 (RFTPYEWYNPHPCNPDSDVVENNFTLLNSFWFGVGALMQQGSELMPKALSTRIVGG) are cytoplasmic. A helical membrane pass occupies residues 654–674 (IWWFFTLIIISSYTANLAAFL). The Extracellular portion of the chain corresponds to 675–834 (TVERMESPID…KEASALGVEN (160 aa)). L-glutamate is bound by residues S704 and T705. Residue S725 is modified to Phosphoserine; by PKC. Residue E753 participates in L-glutamate binding. A Phosphothreonine; by PKC modification is found at T761. A disulfide bridge links C765 with C819. The N-linked (GlcNAc...) asparagine glycan is linked to N766. Residues 835–855 (IGGIFIVLAAGLVLSVFVAIG) form a helical membrane-spanning segment. Residues 856 to 918 (EFIYKSRKNN…IRKQSSVHTV (63 aa)) lie on the Cytoplasmic side of the membrane.

The protein belongs to the glutamate-gated ion channel (TC 1.A.10.1) family. GRIK1 subfamily. As to quaternary structure, homotetramer or heterotetramer of pore-forming glutamate receptor subunits. Tetramers may be formed by the dimerization of dimers. Can form functional heteromeric receptors with GRIK4 and GRIK5. Interacts with KLHL17.

Its subcellular location is the cell membrane. It localises to the postsynaptic cell membrane. It catalyses the reaction Ca(2+)(in) = Ca(2+)(out). Its function is as follows. Ionotropic glutamate receptor that functions as a cation-permeable ligand-gated ion channel, gated by L-glutamate and the glutamatergic agonist kainic acid. L-glutamate acts as an excitatory neurotransmitter at many synapses in the central nervous system. Binding of the excitatory neurotransmitter L-glutamate induces a conformation change, leading to the opening of the cation channel, and thereby converts the chemical signal to an electrical impulse. The receptor then desensitizes rapidly and enters a transient inactive state, characterized by the presence of bound agonist. This chain is Glutamate receptor ionotropic, kainate 1 (GRIK1), found in Macaca fascicularis (Crab-eating macaque).